The primary structure comprises 749 residues: 5-methyltetrahydropteroyltriglutamate--homocysteine methyltransferase (749 aa).

5-methyltetrahydropteroyltri-L-glutamate is bound by residues 18-21 (REWK) and lysine 112. L-homocysteine-binding positions include 420–422 (IGS) and glutamate 473. Residues 420 to 422 (IGS) and glutamate 473 each bind L-methionine. Tryptophan 550 contributes to the 5-methyltetrahydropteroyltri-L-glutamate binding site. L-homocysteine is bound at residue aspartate 588. Position 588 (aspartate 588) interacts with L-methionine. Residue glutamate 594 coordinates 5-methyltetrahydropteroyltri-L-glutamate. Zn(2+)-binding residues include histidine 630, cysteine 632, and glutamate 654. Residue histidine 683 is the Proton donor of the active site. Cysteine 715 serves as a coordination point for Zn(2+).

This sequence belongs to the vitamin-B12 independent methionine synthase family. Zn(2+) is required as a cofactor.

The enzyme catalyses 5-methyltetrahydropteroyltri-L-glutamate + L-homocysteine = tetrahydropteroyltri-L-glutamate + L-methionine. The protein operates within amino-acid biosynthesis; L-methionine biosynthesis via de novo pathway; L-methionine from L-homocysteine (MetE route): step 1/1. Catalyzes the transfer of a methyl group from 5-methyltetrahydrofolate to homocysteine resulting in methionine formation. The protein is 5-methyltetrahydropteroyltriglutamate--homocysteine methyltransferase of Staphylococcus haemolyticus (strain JCSC1435).